The sequence spans 512 residues: Cytoplasmic tRNA 2-thiolation protein 2-A (512 aa).

This sequence belongs to the CTU2/NCS2 family.

The protein resides in the cytoplasm. It functions in the pathway tRNA modification; 5-methoxycarbonylmethyl-2-thiouridine-tRNA biosynthesis. In terms of biological role, plays a central role in 2-thiolation of mcm(5)S(2)U at tRNA wobble positions of tRNA(Lys), tRNA(Glu) and tRNA(Gln). May act by forming a heterodimer with ctu1/atpbd3 that ligates sulfur from thiocarboxylated urm1 onto the uridine of tRNAs at wobble position. In Xenopus laevis (African clawed frog), this protein is Cytoplasmic tRNA 2-thiolation protein 2-A (ctu2-a).